We begin with the raw amino-acid sequence, 782 residues long: Protein bicaudal D (782 aa).

The stretch at 15-77 (VQDLQMEVER…RHELDITQEA (63 aa)) forms a coiled coil. Position 103 is a phosphoserine (Ser103). Positions 107–249 (ETSLNLQIFD…LETLQGEREA (143 aa)) form a coiled coil. Residues Ser285, Ser288, and Ser305 each carry the phosphoserine modification. Thr306 carries the phosphothreonine modification. The residue at position 310 (Ser310) is a Phosphoserine. 2 coiled-coil regions span residues 320–368 (SEIH…FMSR) and 444–477 (TTTL…TLTH). A Phosphoserine modification is found at Ser528. Coiled-coil stretches lie at residues 603–630 (EKVN…KREQ) and 695–743 (CEEY…MEMD). The interval 699–722 (VTQVDDLNRQLEAAEEEKKTLNQL) is interaction with Rab6. The interval 744–782 (REMRHVRRPMPAQRGTSGKSSFSTRPSSRNPASSNANPF) is disordered. The span at 757–767 (RGTSGKSSFST) shows a compositional bias: polar residues. Residues 768-782 (RPSSRNPASSNANPF) show a composition bias toward low complexity.

This sequence belongs to the BicD family. In terms of assembly, may homodimerize but does not interact with BicDR. Interacts (via C-terminal domain) with Rab6. As to expression, in ovaries, expressed in oocyte and nurse cells.

The protein localises to the cytoplasm. Its subcellular location is the cytoskeleton. Functionally, this protein is essential for differentiation. It may play a role in localizing of Nanos (a maternal determinant) activity in oocytes. Functions redundantly with BicDR. During oogenesis, plays a specific role, together with Rab6 but independently of Sec5, in the polarization of the oocyte microtubule cytoskeleton, in oskar mRNA localization and in the anterodorsal secretion of grk. Plays a role in the biogenesis of annulate lamellae containing nuclear pore complex components. During macrochaetae development, together with BicDR, involved in Rab 6 and Spn-F stability and distribution and actin cytoskeleton organization. This is Protein bicaudal D from Drosophila melanogaster (Fruit fly).